Reading from the N-terminus, the 346-residue chain is Putative aminopeptidase YhfE (346 aa).

Positions 68 and 185 each coordinate a divalent metal cation. Catalysis depends on glutamate 219, which acts as the Proton acceptor. A divalent metal cation is bound by residues glutamate 220, aspartate 240, and histidine 320.

Belongs to the peptidase M42 family. A divalent metal cation is required as a cofactor.

The sequence is that of Putative aminopeptidase YhfE (yhfE) from Bacillus subtilis (strain 168).